A 714-amino-acid chain; its full sequence is Fatty acid oxidation complex subunit alpha (714 aa).

The interval 1 to 190 (MEMASAFTLN…KLGLVDDVVP (190 aa)) is enoyl-CoA hydratase. Residues 306–714 (APLNSVGILG…FWKTTATDLQ (409 aa)) are 3-hydroxyacyl-CoA dehydrogenase.

It in the N-terminal section; belongs to the enoyl-CoA hydratase/isomerase family. In the central section; belongs to the 3-hydroxyacyl-CoA dehydrogenase family. In terms of assembly, heterotetramer of two alpha chains (FadJ) and two beta chains (FadI).

The protein resides in the cytoplasm. The enzyme catalyses a (3S)-3-hydroxyacyl-CoA = a (2E)-enoyl-CoA + H2O. It catalyses the reaction a 4-saturated-(3S)-3-hydroxyacyl-CoA = a (3E)-enoyl-CoA + H2O. The catalysed reaction is a (3S)-3-hydroxyacyl-CoA + NAD(+) = a 3-oxoacyl-CoA + NADH + H(+). It carries out the reaction (3S)-3-hydroxybutanoyl-CoA = (3R)-3-hydroxybutanoyl-CoA. It participates in lipid metabolism; fatty acid beta-oxidation. Catalyzes the formation of a hydroxyacyl-CoA by addition of water on enoyl-CoA. Also exhibits 3-hydroxyacyl-CoA epimerase and 3-hydroxyacyl-CoA dehydrogenase activities. The polypeptide is Fatty acid oxidation complex subunit alpha (Shigella flexneri).